Consider the following 278-residue polypeptide: Cytoplasmic envelopment protein 1 (278 aa).

Belongs to the herpesviridae cytoplasmic envelopment protein 1 family. Interacts with BSRF1 tegument protein; the BBRF2-BSRF1 complexes oligomerize and might play a role in tethering the viral nucleocapsids to the host Golgi membrane during secondary envelopment.

It localises to the virion. Its subcellular location is the virion tegument. The protein resides in the host cytoplasm. The protein localises to the host Golgi apparatus. In terms of biological role, plays a critical role in cytoplasmic virus egress. Participates in the final step of tegumentation and envelope acquisition within the host cytoplasm. The polypeptide is Cytoplasmic envelopment protein 1 (Homo sapiens (Human)).